Here is a 352-residue protein sequence, read N- to C-terminus: CD5 antigen-like (352 aa).

An N-terminal signal peptide occupies residues 1–21 (MAPLFNLMLAILSIFVGSCFS). 3 consecutive SRCR domains span residues 27 to 128 (VQLV…AQCE), 141 to 241 (VRLV…MECE), and 246 to 348 (LKLV…VICT). Intrachain disulfides connect C36–C70, C52–C117, C65–C127, C98–C108, C166–C230, C179–C240, C211–C221, C255–C289, C271–C337, C284–C347, and C317–C327. N-linked (GlcNAc...) asparagine glycosylation is present at N99. N229 is a glycosylation site (N-linked (GlcNAc...) asparagine).

Interacts with FASN; the interaction is direct. Interacts (via SRCR2 and SRCR3) with pentameric IgM (via Fc region); disulfide-linked. In terms of processing, N-glycosylated. N-glycan at Asn-99 possesses only alpha2,6-sialylated terminals, while Asn-229 possesses both alpha2,6-sialylated and non-sialylated terminals. N-glycosylation increases secretion. As to expression, specifically expressed in tissue macrophages. Expressed in thymus, liver, spleen and lymph nodes. Present in Th17 cells; mainly present in non-pathogenic Th17 cells.

It is found in the secreted. The protein resides in the cytoplasm. In terms of biological role, secreted protein that acts as a key regulator of lipid synthesis: mainly expressed by macrophages in lymphoid and inflamed tissues and regulates mechanisms in inflammatory responses, such as infection or atherosclerosis. Able to inhibit lipid droplet size in adipocytes. Following incorporation into mature adipocytes via CD36-mediated endocytosis, associates with cytosolic FASN, inhibiting fatty acid synthase activity and leading to lipolysis, the degradation of triacylglycerols into glycerol and free fatty acids (FFA). CD5L-induced lipolysis occurs with progression of obesity: participates in obesity-associated inflammation following recruitment of inflammatory macrophages into adipose tissues, a cause of insulin resistance and obesity-related metabolic disease. Regulation of intracellular lipids mediated by CD5L has a direct effect on transcription regulation mediated by nuclear receptors ROR-gamma (RORC). Acts as a key regulator of metabolic switch in T-helper Th17 cells. Regulates the expression of pro-inflammatory genes in Th17 cells by altering the lipid content and limiting synthesis of cholesterol ligand of RORC, the master transcription factor of Th17-cell differentiation. CD5L is mainly present in non-pathogenic Th17 cells, where it decreases the content of polyunsaturated fatty acyls (PUFA), affecting two metabolic proteins MSMO1 and CYP51A1, which synthesize ligands of RORC, limiting RORC activity and expression of pro-inflammatory genes. Participates in obesity-associated autoimmunity via its association with IgM, interfering with the binding of IgM to Fcalpha/mu receptor and enhancing the development of long-lived plasma cells that produce high-affinity IgG autoantibodies. Also acts as an inhibitor of apoptosis in macrophages: promotes macrophage survival from the apoptotic effects of oxidized lipids in case of atherosclerosis. Involved in early response to microbial infection against various pathogens by acting as a pattern recognition receptor and by promoting autophagy. This chain is CD5 antigen-like (Cd5l), found in Mus musculus (Mouse).